A 253-amino-acid chain; its full sequence is Nurim homolog (253 aa).

Residues 1 to 2 lie on the Nuclear side of the membrane; sequence MA. The chain crosses the membrane as a helical span at residues 3–30; the sequence is TFAKVMLLLSSVATFGYTFFVVGKLMLF. Residues 31–56 lie on the Perinuclear space side of the membrane; sequence LSTPRSISKAHTWIFNLLDNKSRLET. Residues 57 to 78 form a helical membrane-spanning segment; it reads AYGPIVFDTLYLIGFIFQHSFL. Residues 79–96 are Nuclear-facing; the sequence is KSALVKNLWRKLGLAAAE. The chain crosses the membrane as a helical span at residues 97–113; it reads RTIYSLTSSICLHYLLK. Residues 114–132 are Perinuclear space-facing; it reads NWLPAQSIVLWQVDVDESA. Residues 133–161 traverse the membrane as a helical segment; the sequence is PLWWTFVVTHGLGWAVIFGGSLIMDLPEL. Topologically, residues 162 to 188 are nuclear; sequence LGVKQVYYDLKEYGEPVAYKSSELRNL. Residues 189 to 207 traverse the membrane as a helical segment; it reads YSHVRHPSFVGLSVILFAT. The Perinuclear space segment spans residues 208 to 213; sequence NVMSLD. The helical transmembrane segment at 214–231 threads the bilayer; it reads RLLLASLLTVYMYVAWST. At 232–253 the chain is on the nuclear side; sequence DDKDVAYQKQQLRNKKHELKAQ.

The protein belongs to the nurim family.

It is found in the nucleus inner membrane. This Drosophila pseudoobscura pseudoobscura (Fruit fly) protein is Nurim homolog (nrm).